Reading from the N-terminus, the 372-residue chain is Rab9 effector protein with kelch motifs (372 aa).

5 Kelch repeats span residues 49-95 (KVFI…FIPS), 100-146 (SIWV…TSSA), 151-203 (QLYV…AAGT), 204-250 (KLFI…SAVA), and 254-303 (HLYV…IIPW). The segment at 309-341 (SEKEDSNSATVNRDAEKGDSTEKGVTQGGDSQE) is disordered. Positions 321–330 (RDAEKGDSTE) are enriched in basic and acidic residues. Residues 349 to 372 (LCFVFGGMNTEGEIYDDCIVTAVD) form a Kelch 6 repeat.

As to quaternary structure, interacts with PIKFYVE; the interaction recruits RABEPK to the endosomal membrane. Interacts with RAB9 in its GTP-bound conformation. Post-translationally, phosphorylated on Ser residues by PIKFYVE.

Its subcellular location is the cytoplasm. It is found in the endosome membrane. Rab9 effector required for endosome to trans-Golgi network (TGN) transport. The polypeptide is Rab9 effector protein with kelch motifs (RABEPK) (Bos taurus (Bovine)).